An 847-amino-acid polypeptide reads, in one-letter code: Receptor-like protein 12 (847 aa).

The first 27 residues, 1-27 (MMIRSHRHWVFSSRIIIFLSLLVHSLA), serve as a signal peptide directing secretion. Residues 28 to 798 (SSSPHFCRDD…LSEAEENMFN (771 aa)) lie on the Extracellular side of the membrane. N52, N66, N103, and N132 each carry an N-linked (GlcNAc...) asparagine glycan. LRR repeat units follow at residues 109–133 (LQYL…LGNL), 135–157 (HLTL…IGNL), 158–181 (NQLR…LGNL), 183–205 (RLVN…IGDL), 206–229 (KQLR…LGNL), 231–253 (NLVH…IGNL), 254–277 (IELR…FANL), 279–301 (KLSI…MSIF), 302–325 (HNLE…LLLI), 326–350 (PSLE…TSSS), 351–374 (TKLQ…ISRL), 375–398 (LNLE…ISKL), 400–422 (NLLH…LWRL), 424–442 (TMVL…SQEE), 443–466 (ALIE…ICKL), 467–491 (SSLG…RNFS), 492–514 (GSIK…IFSK), 516–539 (TELV…LINC), 541–562 (ALEL…WLES), 563–587 (LPSL…HASI), 589–613 (FQSL…YFSN), 657–681 (RRDF…LGYL), 682–704 (KELR…FLAN), 705–729 (LTKL…LAAL), and 731–754 (FLSY…QFQR). N180 is a glycosylation site (N-linked (GlcNAc...) asparagine). N-linked (GlcNAc...) asparagine glycosylation is found at N210 and N228. N263, N276, and N289 each carry an N-linked (GlcNAc...) asparagine glycan. N-linked (GlcNAc...) asparagine glycosylation is present at N346. The N-linked (GlcNAc...) asparagine glycan is linked to N386. N437 carries an N-linked (GlcNAc...) asparagine glycan. Residues N489 and N503 are each glycosylated (N-linked (GlcNAc...) asparagine). N-linked (GlcNAc...) asparagine glycosylation occurs at N601. N-linked (GlcNAc...) asparagine glycans are attached at residues N688 and N704. N736 is a glycosylation site (N-linked (GlcNAc...) asparagine). The helical transmembrane segment at 799-819 (WVAAAIAYGPGVLCGLVIGHF) threads the bilayer. Topologically, residues 820–847 (YTSHNHEWFTEKFGRKQHKALTSVKCSL) are cytoplasmic.

The protein belongs to the RLP family.

The protein resides in the cell membrane. Its function is as follows. Involved in the perception of CLV3 and CLV3-like peptides, that act as extracellular signals regulating meristems maintenance. The polypeptide is Receptor-like protein 12 (Arabidopsis thaliana (Mouse-ear cress)).